The following is a 509-amino-acid chain: Dihydrolipoyl dehydrogenase, mitochondrial (509 aa).

The transit peptide at M1–Y35 directs the protein to the mitochondrion. N6-acetyllysine; alternate is present on K66. K66 bears the N6-succinyllysine; alternate mark. Residues E71 to C80 and K89 each bind FAD. Cysteines 80 and 85 form a disulfide. N6-acetyllysine; alternate is present on residues K104, K122, K132, and K143. N6-succinyllysine; alternate occurs at positions 104, 122, 132, and 143. G154 lines the FAD pocket. Residues K159 and K166 each carry the N6-succinyllysine modification. T183–S185 lines the FAD pocket. NAD(+) contacts are provided by residues G220 to E227 and E243. 2 positions are modified to N6-succinyllysine: K273 and K277. V278 provides a ligand contact to NAD(+). Phosphoserine occurs at positions 285 and 297. G314 contributes to the NAD(+) binding site. The residue at position 346 (K346) is an N6-acetyllysine. Residues D355 and M361–H364 each bind FAD. K410 is modified (N6-acetyllysine; alternate). The residue at position 410 (K410) is an N6-succinyllysine; alternate. Residues K417 and K420 each carry the N6-acetyllysine modification. N6-succinyllysine is present on K430. H487 functions as the Proton acceptor in the catalytic mechanism. Position 502 is a phosphoserine (S502). Position 505 is an N6-acetyllysine; alternate (K505). K505 bears the N6-succinyllysine; alternate mark.

It belongs to the class-I pyridine nucleotide-disulfide oxidoreductase family. As to quaternary structure, homodimer. Part of the multimeric pyruvate dehydrogenase complex that contains multiple copies of pyruvate dehydrogenase (subunits PDHA (PDHA1 or PDHA2) and PDHB, E1), dihydrolipoamide acetyltransferase (DLAT, E2) and lipoamide dehydrogenase (DLD, E3). These subunits are bound to an inner core composed of about 48 DLAT and 12 PDHX molecules (by non covalent bonds). The 2-oxoglutarate dehydrogenase complex is composed of OGDH (2-oxoglutarate dehydrogenase; E1), DLST (dihydrolipoamide succinyltransferase; E2), DLD (dihydrolipoamide dehydrogenase; E3) and the assembly factor KGD4. It contains multiple copies of the three enzymatic components (E1, E2 and E3). In the nucleus, the 2-oxoglutarate dehydrogenase complex associates with KAT2A. Interacts with PDHX. Requires FAD as cofactor. Post-translationally, tyrosine phosphorylated.

It localises to the mitochondrion matrix. The protein localises to the nucleus. It is found in the cell projection. Its subcellular location is the cilium. The protein resides in the flagellum. It localises to the cytoplasmic vesicle. The protein localises to the secretory vesicle. It is found in the acrosome. It carries out the reaction N(6)-[(R)-dihydrolipoyl]-L-lysyl-[protein] + NAD(+) = N(6)-[(R)-lipoyl]-L-lysyl-[protein] + NADH + H(+). With respect to regulation, disruption of native heterodimer state inhibits primary dihydrolipoamide dehydrogenase activity and induces serine protease activity. Its function is as follows. Lipoamide dehydrogenase is a component of the glycine cleavage system as well as an E3 component of three alpha-ketoacid dehydrogenase complexes (pyruvate-, alpha-ketoglutarate-, and branched-chain amino acid-dehydrogenase complex). The 2-oxoglutarate dehydrogenase complex is mainly active in the mitochondrion. A fraction of the 2-oxoglutarate dehydrogenase complex also localizes in the nucleus and is required for lysine succinylation of histones: associates with KAT2A on chromatin and provides succinyl-CoA to histone succinyltransferase KAT2A. In monomeric form may have additional moonlighting function as serine protease. Involved in the hyperactivation of spermatazoa during capacitation and in the spermatazoal acrosome reaction. The protein is Dihydrolipoyl dehydrogenase, mitochondrial (DLD) of Homo sapiens (Human).